Here is a 216-residue protein sequence, read N- to C-terminus: Probable ubiquitin-conjugating enzyme E2 ECU01_1010 (216 aa).

Residues 1–10 (MFKPSAHRRL) show a composition bias toward basic residues. Positions 1–29 (MFKPSAHRRLPREDDIIQEDDEDGPLWPS) are disordered. Residues 29-196 (SALRRLSNEE…VIRIAREEDE (168 aa)) enclose the UBC core domain. Cys120 serves as the catalytic Glycyl thioester intermediate.

Belongs to the ubiquitin-conjugating enzyme family.

The enzyme catalyses S-ubiquitinyl-[E1 ubiquitin-activating enzyme]-L-cysteine + [E2 ubiquitin-conjugating enzyme]-L-cysteine = [E1 ubiquitin-activating enzyme]-L-cysteine + S-ubiquitinyl-[E2 ubiquitin-conjugating enzyme]-L-cysteine.. The protein operates within protein modification; protein ubiquitination. Catalyzes the covalent attachment of ubiquitin to other proteins so as to signal them for selective protein degradation. Involved in the formation of multiubiquitin chains. The chain is Probable ubiquitin-conjugating enzyme E2 ECU01_1010 from Encephalitozoon cuniculi (strain GB-M1) (Microsporidian parasite).